The chain runs to 260 residues: MSETLSVAVTDPIVQVKNLAFYYGASKALHNISQDFPRNKVTALIGPSGCGKSTLLRCLNRMNDLVDGARVEGSILLDGTEVNTPAMDVIELRRRVGMVFQKSNPFPKSIYENVIYGLRIAGVRDKAVLDQAVEQSLRSAALWDEVKDRLHESALGMSGGQMQRLCIARAIAVNPEVVLMDEPCSALDPKSTARVEELISELREKYTIIIVTHNMQQAARVSDYTAFLFEGVLVEYGVTEDLFVKPRNKQTEDYITGRFG.

An ABC transporter domain is found at 14–255 (VQVKNLAFYY…PRNKQTEDYI (242 aa)). An ATP-binding site is contributed by 46-53 (GPSGCGKS).

It belongs to the ABC transporter superfamily. Phosphate importer (TC 3.A.1.7) family. As to quaternary structure, the complex is composed of two ATP-binding proteins (PstB), two transmembrane proteins (PstC and PstA) and a solute-binding protein (PstS).

The protein resides in the cell inner membrane. It catalyses the reaction phosphate(out) + ATP + H2O = ADP + 2 phosphate(in) + H(+). In terms of biological role, part of the ABC transporter complex PstSACB involved in phosphate import. Responsible for energy coupling to the transport system. This chain is Phosphate import ATP-binding protein PstB, found in Syntrophotalea carbinolica (strain DSM 2380 / NBRC 103641 / GraBd1) (Pelobacter carbinolicus).